Consider the following 597-residue polypeptide: Protein GRISEA (597 aa).

The copper-fist DNA-binding region spans 1–41 (MPIINGQKMACGPCIRGHRSTKCNHYNERVMVPVRKPGRPL). Cys-11, Cys-14, Cys-23, and His-25 together coordinate Zn(2+). Disordered regions lie at residues 70 to 115 (PAGT…ASRR), 233 to 352 (AFVD…PGFG), 407 to 428 (SRPPTQQQHETPISATAPNGNN), and 467 to 541 (SPNS…SPAL). Polar residues predominate over residues 92-103 (SPASRTSSNRVT). The segment covering 104 to 115 (KSGSGSKSASRR) has biased composition (low complexity). The span at 269–281 (GGSGGGGCCGGGK) shows a compositional bias: gly residues. Positions 287–314 (QAPPPVPAPLPTPPQQQMPNIMPPPQPQ) are enriched in pro residues. Residues 469–495 (NSSHGNSGSADSSANASPSANPLNLAS) show a composition bias toward low complexity. Polar residues predominate over residues 521 to 530 (ANESDGSSNA).

The protein localises to the nucleus. Copper-sensing transcription factor that regulates copper uptake by transactivation of Ctr3, a high affinity copper permease. Binds to the palindromic UAS sequence 5'-TGTTGCTCANNNNAGAGCAACT-3'. Also transactivates Sod2, a mitochondrial manganese superoxide dismutase through the palindromic UAS sequence 5'-GTTTGCTCA-3' with 352 bp separating the two inverted repeats. Loss of function indirectly leads to rearrangement of mitochondrial DNA associated with senescence in wild-type strains. The sequence is that of Protein GRISEA from Podospora anserina (Pleurage anserina).